The following is a 169-amino-acid chain: MYTYSLLNLSHCRRQTRKKRKTDHTEGFLMEETKPKTVEDVETVDVYTAKGFLSTGHRYLDVRTNEEFAKSHVEEALNIPYMFKTDEGRVINPDFLSQVASVCKKDEHLIVACNAGGRGSRACVDLLNEGYDHVANMGGGYSAWVDAGFAGDKPPEDLKIACKFRPKEN.

The transit peptide at 1–59 (MYTYSLLNLSHCRRQTRKKRKTDHTEGFLMEETKPKTVEDVETVDVYTAKGFLSTGHRY) directs the protein to the mitochondrion. A Rhodanese domain is found at 60–153 (LDVRTNEEFA…WVDAGFAGDK (94 aa)). Residue Cys-113 is the Cysteine persulfide intermediate of the active site.

As to expression, expressed in root hairs, epidermal cells at the surface of the root and in the pericycle within the stele.

It is found in the mitochondrion. The enzyme catalyses [glutaredoxin]-dithiol + arsenate + glutathione + H(+) = glutathionyl-S-S-[glutaredoxin] + arsenite + H2O. Its activity is regulated as follows. Inhibited by trobenzenesulphonic acid (TNBS). Arsenate reductase critical for arsenic tolerance. Reduces arsenate to arsenite in the root, facilitating efflux of arsenic back into the soil to limit both its accumulation in the root and transport to the shoot. Essential for arsenite efflux from the root, but not necessary for arsenate uptake. The polypeptide is Protein HIGH ARSENIC CONTENT 1, mitochondrial (Arabidopsis thaliana (Mouse-ear cress)).